The primary structure comprises 499 residues: Lysine--tRNA ligase (499 aa).

Glutamate 408 and glutamate 415 together coordinate Mg(2+).

It belongs to the class-II aminoacyl-tRNA synthetase family. As to quaternary structure, homodimer. Mg(2+) serves as cofactor.

The protein localises to the cytoplasm. The enzyme catalyses tRNA(Lys) + L-lysine + ATP = L-lysyl-tRNA(Lys) + AMP + diphosphate. The sequence is that of Lysine--tRNA ligase from Thermoanaerobacter sp. (strain X514).